A 462-amino-acid polypeptide reads, in one-letter code: A-type ATP synthase subunit B (462 aa).

This sequence belongs to the ATPase alpha/beta chains family. In terms of assembly, has multiple subunits with at least A(3), B(3), C, D, E, F, H, I and proteolipid K(x).

Its subcellular location is the cell membrane. Its function is as follows. Component of the A-type ATP synthase that produces ATP from ADP in the presence of a proton gradient across the membrane. The B chain is a regulatory subunit. The polypeptide is A-type ATP synthase subunit B (Methanococcus vannielii (strain ATCC 35089 / DSM 1224 / JCM 13029 / OCM 148 / SB)).